A 596-amino-acid chain; its full sequence is MQNPVASLLFILAMLTGPCPAADYPERTERTQSAGNHVWHIDPDKGNDGNPGTAPSTAWKSMAPANRLIMARGDTLVIHPGEHAVSLALMGEGSKQAPVTIRFMPGRHIFKHGALMTGKPQISNTNDAPNEPKAMAIRLMEAKNIRLEGKPGATDILLEGKAIFVCMEHAENVSLNGLGFDYLHPTMGEFLVTEVEGDTMKATIPDGTLYTVKDGNLTWHGPGWEFRMGGYSKVFDSASGTFQGRFDPGKTVIRELSPGKISITFKEGSPTMKPGQSYQNRNTRRDCCGFFQYRSKNILWNNCHIYYMHGMGVVSQFCENIMFSHLKIAPRPRSLRTNSSWADNLHFSGCRGKIIVKDCVLGASHDDAVNVHGTHLRIIDRPAPNKITVRFMHPQTFGFDAFAAGDRIDYVSCNTLVPYASNTVSGVKQLNEKEIELTLQHPNPGNIQPDDVVENVTWTPSVHISNTVCRHIPTRGFLLTTRKPVLVERCRFEKTGMPAILVEDDASGWYESGVVRNMTISRNTFIQCGEAVIQIVPHAPRPEGDVHRNITITGNTFDLKNGTAIRIRHTGDVKAEKNTFTKDGKKIPEEKAVDIR.

The signal sequence occupies residues 1–21; the sequence is MQNPVASLLFILAMLTGPCPA. The tract at residues 23–57 is disordered; it reads DYPERTERTQSAGNHVWHIDPDKGNDGNPGTAPST. 4 PbH1 repeats span residues 351–373, 482–504, 515–537, and 547–569; these read RGKI…NVHG, RKPV…LVED, VRNM…QIVP, and HRNI…RIRH.

This sequence belongs to the glycosyl hydrolase 110 family. A subfamily.

The enzyme catalyses Hydrolysis of terminal, non-reducing branched (1-&gt;3)-alpha-D-galactosidic residues, producing free D-galactose.. It carries out the reaction Hydrolysis of terminal, non-reducing alpha-D-galactose residues in alpha-D-galactosides, including galactose oligosaccharides, galactomannans and galactolipids.. Alpha-galactosidase that specifically removes branched alpha-1,3-linked galactose residues present in blood group B antigens. Has no activity toward linear alpha-1,3-linked galactose residues. This chain is Alpha-1,3-galactosidase A (glaA), found in Akkermansia muciniphila (strain ATCC BAA-835 / DSM 22959 / JCM 33894 / BCRC 81048 / CCUG 64013 / CIP 107961 / Muc).